A 315-amino-acid chain; its full sequence is Porphobilinogen deaminase (315 aa).

Cys238 is modified (S-(dipyrrolylmethanemethyl)cysteine).

The protein belongs to the HMBS family. In terms of assembly, monomer. Dipyrromethane is required as a cofactor.

The catalysed reaction is 4 porphobilinogen + H2O = hydroxymethylbilane + 4 NH4(+). It participates in porphyrin-containing compound metabolism; protoporphyrin-IX biosynthesis; coproporphyrinogen-III from 5-aminolevulinate: step 2/4. Its function is as follows. Tetrapolymerization of the monopyrrole PBG into the hydroxymethylbilane pre-uroporphyrinogen in several discrete steps. The polypeptide is Porphobilinogen deaminase (Albidiferax ferrireducens (strain ATCC BAA-621 / DSM 15236 / T118) (Rhodoferax ferrireducens)).